The following is an 81-amino-acid chain: Prophage excisionase-like protein (81 aa).

This sequence to lambdoid phages excisionases.

The sequence is that of Prophage excisionase-like protein (xisE) from Escherichia coli (strain K12).